Here is a 396-residue protein sequence, read N- to C-terminus: Purine ribonucleoside efflux pump NepI (396 aa).

Residues 1-21 lie on the Cytoplasmic side of the membrane; sequence MSEFIAENRGADAITRPNWSA. A helical transmembrane segment spans residues 22–42; the sequence is VFSVAFCVACLIIVEFLPVSL. Residues 43 to 54 are Periplasmic-facing; sequence LTPMAQDLGISE. Residues 55–75 traverse the membrane as a helical segment; sequence GVAGQSVTVTAFVAMFASLFI. Topologically, residues 76–85 are cytoplasmic; that stretch reads TQTIQATDRR. The helical transmembrane segment at 86-106 threads the bilayer; it reads YVVILFAVLLTLSCLLVSFAN. Position 107 (Ser-107) is a topological domain, periplasmic. A helical transmembrane segment spans residues 108-128; that stretch reads FSLLLIGRACLGLALGGFWAM. Topologically, residues 129 to 147 are cytoplasmic; sequence SASLTMRLVPPRTVPKALS. The helical transmembrane segment at 148 to 168 threads the bilayer; it reads VIFGAVSIALVIAAPLGSFLG. Topologically, residues 169-175 are periplasmic; that stretch reads ELIGWRN. The helical transmembrane segment at 176 to 196 threads the bilayer; it reads VFNAAAVMGVLCIFWIIKSLP. The Cytoplasmic segment spans residues 197 to 215; the sequence is SLPGEPSHQKQNTFRLLQR. A helical membrane pass occupies residues 216–236; sequence PGVMAGMIAIFMSFAGQFAFF. The Periplasmic segment spans residues 237–255; it reads TYIRPVYMNLAGFGVDGLT. Residues 256–276 form a helical membrane-spanning segment; it reads LVLLSFGIASFIGTSLSSFIL. Residues 277–281 lie on the Cytoplasmic side of the membrane; it reads KRSVK. The helical transmembrane segment at 282 to 302 threads the bilayer; the sequence is LALAGAPLILAVSALVLTLWG. Over 303 to 305 the chain is Periplasmic; it reads SDK. The helical transmembrane segment at 306–326 threads the bilayer; it reads IVATGVAIIWGLTFALVPVGW. The Cytoplasmic portion of the chain corresponds to 327–343; sequence STWITRSLADQAEKAGS. Residues 344-364 traverse the membrane as a helical segment; it reads IQVAVIQLANTCGAAIGGYAL. Topologically, residues 365–366 are periplasmic; the sequence is DN. The helical transmembrane segment at 367–387 threads the bilayer; that stretch reads IGLTSPLMLSGTLMLLTALLV. Residues 388–396 lie on the Cytoplasmic side of the membrane; sequence TAKVKMKKS.

It belongs to the major facilitator superfamily. DHA1 family. NepI (TC 2.A.1.2.26) subfamily.

The protein resides in the cell inner membrane. It carries out the reaction inosine(in) + H(+)(out) = inosine(out) + H(+)(in). It catalyses the reaction guanosine(in) + H(+)(out) = guanosine(out) + H(+)(in). Its function is as follows. Involved in the efflux of purine ribonucleosides, such as inosine and guanosine. The protein is Purine ribonucleoside efflux pump NepI of Shigella flexneri.